Here is a 686-residue protein sequence, read N- to C-terminus: Eukaryotic translation initiation factor 3 subunit B (686 aa).

The segment at 1–29 (MAKKHAGADANDSDYNEEPNFEDPPGFVD) is disordered. Over residues 11 to 21 (NDSDYNEEPNF) the composition is skewed to acidic residues. An RRM domain is found at 53–137 (SVVVVDNIPK…HTFAVNLFTD (85 aa)). WD repeat units lie at residues 203–242 (TRER…KIQK), 289–327 (DGMS…LLDL), 330–365 (IKIP…TLME), 438–480 (EIRE…KPSL), and 526–571 (PDHF…IKRT). Positions 590-642 (AEEKQKEIKKNLKKYYAVFEQKDRLRLTRASKELLEKRAQLRETFMEYRNKRI) form a coiled coil.

It belongs to the eIF-3 subunit B family. As to quaternary structure, component of the eukaryotic translation initiation factor 3 (eIF-3) complex. The eIF-3 complex interacts with pix. Interacts with mxt.

Its subcellular location is the cytoplasm. Functionally, RNA-binding component of the eukaryotic translation initiation factor 3 (eIF-3) complex, which is involved in protein synthesis of a specialized repertoire of mRNAs and, together with other initiation factors, stimulates binding of mRNA and methionyl-tRNAi to the 40S ribosome. The eIF-3 complex specifically targets and initiates translation of a subset of mRNAs involved in cell proliferation. The polypeptide is Eukaryotic translation initiation factor 3 subunit B (Drosophila ananassae (Fruit fly)).